The chain runs to 249 residues: Proteasome subunit alpha type-7-1 (249 aa).

The residue at position 177 (serine 177) is a Phosphoserine.

The protein belongs to the peptidase T1A family. The 26S proteasome consists of a 20S proteasome core and two 19S regulatory subunits. The 20S proteasome core is composed of 28 subunits that are arranged in four stacked rings, resulting in a barrel-shaped structure. The two end rings are each formed by seven alpha subunits, and the two central rings are each formed by seven beta subunits. The catalytic chamber with the active sites is on the inside of the barrel. Interacts with PI31; this interaction is reduced by PI31 ADP-ribosylation.

It localises to the cytoplasm. It is found in the nucleus. Its function is as follows. The proteasome is a multicatalytic proteinase complex which is characterized by its ability to cleave peptides with Arg, Phe, Tyr, Leu, and Glu adjacent to the leaving group at neutral or slightly basic pH. The proteasome has an ATP-dependent proteolytic activity. The sequence is that of Proteasome subunit alpha type-7-1 (Prosalpha4) from Drosophila melanogaster (Fruit fly).